Consider the following 464-residue polypeptide: ATP synthase subunit beta (464 aa).

Residue 153–160 coordinates ATP; the sequence is GGAGVGKT.

Belongs to the ATPase alpha/beta chains family. F-type ATPases have 2 components, CF(1) - the catalytic core - and CF(0) - the membrane proton channel. CF(1) has five subunits: alpha(3), beta(3), gamma(1), delta(1), epsilon(1). CF(0) has three main subunits: a(1), b(2) and c(9-12). The alpha and beta chains form an alternating ring which encloses part of the gamma chain. CF(1) is attached to CF(0) by a central stalk formed by the gamma and epsilon chains, while a peripheral stalk is formed by the delta and b chains.

It is found in the cell membrane. The enzyme catalyses ATP + H2O + 4 H(+)(in) = ADP + phosphate + 5 H(+)(out). Functionally, produces ATP from ADP in the presence of a proton gradient across the membrane. The catalytic sites are hosted primarily by the beta subunits. This is ATP synthase subunit beta from Clostridium novyi (strain NT).